The sequence spans 625 residues: MLVCGKGFLKCRAPGVPFFCDKRKSFFTKTKRGFHSLPLGTGVRVYFNNNLRYSSNSIEVVEKAAINMGSKEDKADNPALSSYDDAMEALSTLISRRNRGDRTPTKGNRDKLEQVVTYLKILDLEDKIKELKVIHVAGTKGKGSTCVFSEAILRNCGFRTGMFTSPHLIDVRERFRIDGLDISEEKFLQYFWECWKLLKEKAVDGLTMPPLFQFLTVLAFKIFVCEKVDVAVIEVGLGGKLDSTNVIQKPVVCGIASLGMDHMDILGNTLADIAFHKAGIFKPQIPAFTVPQLSEAMDVLQKTANNLEVPLEVVAPLEPKKLDGVTLGLSGDHQLVNAGLAVSLSRCWLQRTGNWKKIFPNESKETEIPVAFCRGLATARLHGRAQVVHDVVSDPQDSSDSMETPCGDLIFYLDGAHSPESMEACGRWFSSAVRGDKSLSTAVNGYMRHGEYGTDLNRVSKQILLFNCMEVRDPQVLLPKLVTTCASSGTHFSRALFVPSMSTYNKVISGASAIPSDTRRKDLTWQFRLQRLWEKSIQGTDAGLDHTLKPDGITALPPHDFLCGDAPQCGGPAGTPVTSSAVMPSLPLTINWLRDCVRRNPSLKLEVLVTGSLHLVGDVLRLLKR.

141–144 contributes to the ATP binding site; sequence GKGS. S165, E234, and H262 together coordinate Mg(2+). Residues R384 and D414 each coordinate ATP.

The protein belongs to the folylpolyglutamate synthase family. Requires a monovalent cation as cofactor.

It is found in the mitochondrion inner membrane. The protein localises to the mitochondrion matrix. It catalyses the reaction (6S)-5,6,7,8-tetrahydrofolyl-(gamma-L-Glu)(n) + L-glutamate + ATP = (6S)-5,6,7,8-tetrahydrofolyl-(gamma-L-Glu)(n+1) + ADP + phosphate + H(+). It participates in cofactor biosynthesis; tetrahydrofolylpolyglutamate biosynthesis. In terms of biological role, catalyzes conversion of folates to polyglutamate derivatives allowing concentration of folate compounds in the cell and the intracellular retention of these cofactors, which are important substrates for most of the folate-dependent enzymes that are involved in one-carbon transfer reactions involved in purine, pyrimidine and amino acid synthesis. Essential for organellar and whole-plant folate homeostasis. The chain is Folylpolyglutamate synthase from Arabidopsis thaliana (Mouse-ear cress).